The sequence spans 334 residues: RNA 3'-terminal phosphate cyclase (334 aa).

ATP is bound at residue 279-282 (HMGD). H303 acts as the Tele-AMP-histidine intermediate in catalysis.

It belongs to the RNA 3'-terminal cyclase family. Type 1 subfamily.

It is found in the cytoplasm. The enzyme catalyses a 3'-end 3'-phospho-ribonucleotide-RNA + ATP = a 3'-end 2',3'-cyclophospho-ribonucleotide-RNA + AMP + diphosphate. Functionally, catalyzes the conversion of 3'-phosphate to a 2',3'-cyclic phosphodiester at the end of RNA. The mechanism of action of the enzyme occurs in 3 steps: (A) adenylation of the enzyme by ATP; (B) transfer of adenylate to an RNA-N3'P to produce RNA-N3'PP5'A; (C) and attack of the adjacent 2'-hydroxyl on the 3'-phosphorus in the diester linkage to produce the cyclic end product. The biological role of this enzyme is unknown but it is likely to function in some aspects of cellular RNA processing. This chain is RNA 3'-terminal phosphate cyclase, found in Metallosphaera sedula (strain ATCC 51363 / DSM 5348 / JCM 9185 / NBRC 15509 / TH2).